A 193-amino-acid polypeptide reads, in one-letter code: MRLCDRDIEAWLDEGRLSITPRPPVERINGVTVDVRLGNKFRTFSGHTAAYIDLSGPKDEVSAALDRVMSDEIVLAEGEAFYLHPGELALAVTFESVTLPADLVGWLDGRSSLARLGLMVHVTAHRIDPGWSGHIVLEFFNAGKLPLALRPGMMIGALSFEPLTGPADRPYNRRQDAKYRDQQGAVASRIDKD.

DCTP-binding positions include 110–115, Asp-128, 136–138, Tyr-171, Lys-178, and Gln-182; these read RSSLAR and VLE. The active-site Proton donor/acceptor is the Glu-138. The segment covering 170–181 has biased composition (basic and acidic residues); sequence PYNRRQDAKYRD. Residues 170–193 form a disordered region; sequence PYNRRQDAKYRDQQGAVASRIDKD.

It belongs to the dCTP deaminase family. Homotrimer.

It carries out the reaction dCTP + H2O + H(+) = dUTP + NH4(+). Its pathway is pyrimidine metabolism; dUMP biosynthesis; dUMP from dCTP (dUTP route): step 1/2. In terms of biological role, catalyzes the deamination of dCTP to dUTP. The polypeptide is dCTP deaminase (Enterobacter sp. (strain 638)).